The primary structure comprises 350 residues: Phosphotriesterase-related protein (350 aa).

A divalent metal cation is bound by residues His-22, His-24, Glu-169, His-201, His-230, and Asp-298.

It belongs to the metallo-dependent hydrolases superfamily. Phosphotriesterase family. A divalent metal cation is required as a cofactor.

This Drosophila erecta (Fruit fly) protein is Phosphotriesterase-related protein.